We begin with the raw amino-acid sequence, 266 residues long: Hydroxyethylthiazole kinase (266 aa).

Residue methionine 41 coordinates substrate. ATP contacts are provided by arginine 117 and serine 163. Alanine 190 provides a ligand contact to substrate.

Belongs to the Thz kinase family. The cofactor is Mg(2+).

The enzyme catalyses 5-(2-hydroxyethyl)-4-methylthiazole + ATP = 4-methyl-5-(2-phosphooxyethyl)-thiazole + ADP + H(+). It participates in cofactor biosynthesis; thiamine diphosphate biosynthesis; 4-methyl-5-(2-phosphoethyl)-thiazole from 5-(2-hydroxyethyl)-4-methylthiazole: step 1/1. Functionally, catalyzes the phosphorylation of the hydroxyl group of 4-methyl-5-beta-hydroxyethylthiazole (THZ). This Histophilus somni (strain 129Pt) (Haemophilus somnus) protein is Hydroxyethylthiazole kinase.